The sequence spans 336 residues: Dihydroorotate dehydrogenase (quinone) (336 aa).

FMN contacts are provided by residues 62–66 (AGLDK) and Thr-86. Lys-66 contributes to the substrate binding site. 111 to 115 (NRMGF) is a binding site for substrate. FMN-binding residues include Asn-139 and Asn-172. Asn-172 contacts substrate. Catalysis depends on Ser-175, which acts as the Nucleophile. Position 177 (Asn-177) interacts with substrate. FMN is bound by residues Lys-217 and Thr-245. 246-247 (NT) is a binding site for substrate. Residues Gly-268, Gly-297, and 318–319 (YS) each bind FMN.

This sequence belongs to the dihydroorotate dehydrogenase family. Type 2 subfamily. In terms of assembly, monomer. FMN is required as a cofactor.

The protein resides in the cell membrane. The catalysed reaction is (S)-dihydroorotate + a quinone = orotate + a quinol. Its pathway is pyrimidine metabolism; UMP biosynthesis via de novo pathway; orotate from (S)-dihydroorotate (quinone route): step 1/1. Catalyzes the conversion of dihydroorotate to orotate with quinone as electron acceptor. The chain is Dihydroorotate dehydrogenase (quinone) from Vibrio vulnificus (strain YJ016).